A 484-amino-acid polypeptide reads, in one-letter code: Glutamyl-tRNA(Gln) amidotransferase subunit A (484 aa).

Residues Lys78 and Ser153 each act as charge relay system in the active site. Residue Ser177 is the Acyl-ester intermediate of the active site.

Belongs to the amidase family. GatA subfamily. As to quaternary structure, heterotrimer of A, B and C subunits.

The enzyme catalyses L-glutamyl-tRNA(Gln) + L-glutamine + ATP + H2O = L-glutaminyl-tRNA(Gln) + L-glutamate + ADP + phosphate + H(+). Functionally, allows the formation of correctly charged Gln-tRNA(Gln) through the transamidation of misacylated Glu-tRNA(Gln) in organisms which lack glutaminyl-tRNA synthetase. The reaction takes place in the presence of glutamine and ATP through an activated gamma-phospho-Glu-tRNA(Gln). This chain is Glutamyl-tRNA(Gln) amidotransferase subunit A, found in Thermodesulfovibrio yellowstonii (strain ATCC 51303 / DSM 11347 / YP87).